Here is a 413-residue protein sequence, read N- to C-terminus: Serine hydroxymethyltransferase (413 aa).

Residues Leu117 and Gly121 to Leu123 each bind (6S)-5,6,7,8-tetrahydrofolate. An N6-(pyridoxal phosphate)lysine modification is found at Lys226. (6S)-5,6,7,8-tetrahydrofolate is bound at residue Ser349–Phe351.

It belongs to the SHMT family. Homodimer. Pyridoxal 5'-phosphate is required as a cofactor.

It is found in the cytoplasm. It carries out the reaction (6R)-5,10-methylene-5,6,7,8-tetrahydrofolate + glycine + H2O = (6S)-5,6,7,8-tetrahydrofolate + L-serine. It functions in the pathway one-carbon metabolism; tetrahydrofolate interconversion. The protein operates within amino-acid biosynthesis; glycine biosynthesis; glycine from L-serine: step 1/1. Catalyzes the reversible interconversion of serine and glycine with tetrahydrofolate (THF) serving as the one-carbon carrier. This reaction serves as the major source of one-carbon groups required for the biosynthesis of purines, thymidylate, methionine, and other important biomolecules. Also exhibits THF-independent aldolase activity toward beta-hydroxyamino acids, producing glycine and aldehydes, via a retro-aldol mechanism. This Listeria welshimeri serovar 6b (strain ATCC 35897 / DSM 20650 / CCUG 15529 / CIP 8149 / NCTC 11857 / SLCC 5334 / V8) protein is Serine hydroxymethyltransferase.